Reading from the N-terminus, the 658-residue chain is UvrABC system protein B (658 aa).

The region spanning 26–414 (AGLKKGLKHQ…PDVIEQIIRP (389 aa)) is the Helicase ATP-binding domain. 39-46 (GATGTGKT) is a binding site for ATP. Positions 92–115 (YYDYYQPEAYVPQSDTYIEKDASI) match the Beta-hairpin motif. A Helicase C-terminal domain is found at 430–592 (QIDDLMDEIN…ITPKTIRKEI (163 aa)). In terms of domain architecture, UVR spans 622–658 (DIFIEGMEHEMKEAAKALDFERAAELRDALLEIKAEG).

The protein belongs to the UvrB family. As to quaternary structure, forms a heterotetramer with UvrA during the search for lesions. Interacts with UvrC in an incision complex.

The protein localises to the cytoplasm. Functionally, the UvrABC repair system catalyzes the recognition and processing of DNA lesions. A damage recognition complex composed of 2 UvrA and 2 UvrB subunits scans DNA for abnormalities. Upon binding of the UvrA(2)B(2) complex to a putative damaged site, the DNA wraps around one UvrB monomer. DNA wrap is dependent on ATP binding by UvrB and probably causes local melting of the DNA helix, facilitating insertion of UvrB beta-hairpin between the DNA strands. Then UvrB probes one DNA strand for the presence of a lesion. If a lesion is found the UvrA subunits dissociate and the UvrB-DNA preincision complex is formed. This complex is subsequently bound by UvrC and the second UvrB is released. If no lesion is found, the DNA wraps around the other UvrB subunit that will check the other stand for damage. This Listeria innocua serovar 6a (strain ATCC BAA-680 / CLIP 11262) protein is UvrABC system protein B.